The following is an 847-amino-acid chain: DNA mismatch repair protein MutS (847 aa).

602-609 (GPNMSGKS) contacts ATP.

It belongs to the DNA mismatch repair MutS family.

Its function is as follows. This protein is involved in the repair of mismatches in DNA. It is possible that it carries out the mismatch recognition step. This protein has a weak ATPase activity. The polypeptide is DNA mismatch repair protein MutS (Streptococcus uberis (strain ATCC BAA-854 / 0140J)).